Here is a 549-residue protein sequence, read N- to C-terminus: CTP synthase (549 aa).

Residues 1 to 272 are amidoligase domain; the sequence is MPPKSSTTKH…DAYVVRRMDL (272 aa). Ser19 contacts CTP. Ser19 is a UTP binding site. Residues 20-25 and Asp77 contribute to the ATP site; that span reads SLGKGL. Residues Asp77 and Glu146 each contribute to the Mg(2+) site. Residues 153 to 155, 193 to 198, and Lys229 contribute to the CTP site; these read DIE and KTKPTQ. UTP is bound by residues 193 to 198 and Lys229; that span reads KTKPTQ. Residues 301 to 548 form the Glutamine amidotransferase type-1 domain; sequence VGKYIDLPDA…VKAAVERKTS (248 aa). Gly360 serves as a coordination point for L-glutamine. Cys387 serves as the catalytic Nucleophile; for glutamine hydrolysis. L-glutamine-binding positions include 388 to 391, Glu411, and Arg473; that span reads LGLQ. Active-site residues include His521 and Glu523.

Belongs to the CTP synthase family. In terms of assembly, homotetramer.

The enzyme catalyses UTP + L-glutamine + ATP + H2O = CTP + L-glutamate + ADP + phosphate + 2 H(+). It carries out the reaction L-glutamine + H2O = L-glutamate + NH4(+). The catalysed reaction is UTP + NH4(+) + ATP = CTP + ADP + phosphate + 2 H(+). It participates in pyrimidine metabolism; CTP biosynthesis via de novo pathway; CTP from UDP: step 2/2. Allosterically activated by GTP, when glutamine is the substrate; GTP has no effect on the reaction when ammonia is the substrate. The allosteric effector GTP functions by stabilizing the protein conformation that binds the tetrahedral intermediate(s) formed during glutamine hydrolysis. Inhibited by the product CTP, via allosteric rather than competitive inhibition. Catalyzes the ATP-dependent amination of UTP to CTP with either L-glutamine or ammonia as the source of nitrogen. Regulates intracellular CTP levels through interactions with the four ribonucleotide triphosphates. The chain is CTP synthase from Streptomyces coelicolor (strain ATCC BAA-471 / A3(2) / M145).